We begin with the raw amino-acid sequence, 135 residues long: Large ribosomal subunit protein uL16 (135 aa).

This sequence belongs to the universal ribosomal protein uL16 family. As to quaternary structure, part of the 50S ribosomal subunit.

Binds 23S rRNA and is also seen to make contacts with the A and possibly P site tRNAs. The chain is Large ribosomal subunit protein uL16 from Desulforapulum autotrophicum (strain ATCC 43914 / DSM 3382 / VKM B-1955 / HRM2) (Desulfobacterium autotrophicum).